A 438-amino-acid chain; its full sequence is tRNA modification GTPase MnmE (438 aa).

Residues Arg21, Glu79, and Lys118 each coordinate (6S)-5-formyl-5,6,7,8-tetrahydrofolate. In terms of domain architecture, TrmE-type G spans 215 to 362; that stretch reads GFSIVLIGAP…LEARIEQIVR (148 aa). Asn225 contributes to the K(+) binding site. GTP contacts are provided by residues 225–230, 244–250, and 269–272; these read NAGKSS, TDIPGTT, and DTAG. Ser229 contacts Mg(2+). K(+)-binding residues include Thr244, Ile246, and Thr249. Mg(2+) is bound at residue Thr250. Lys438 contacts (6S)-5-formyl-5,6,7,8-tetrahydrofolate.

This sequence belongs to the TRAFAC class TrmE-Era-EngA-EngB-Septin-like GTPase superfamily. TrmE GTPase family. As to quaternary structure, homodimer. Heterotetramer of two MnmE and two MnmG subunits. K(+) is required as a cofactor.

It localises to the cytoplasm. Its function is as follows. Exhibits a very high intrinsic GTPase hydrolysis rate. Involved in the addition of a carboxymethylaminomethyl (cmnm) group at the wobble position (U34) of certain tRNAs, forming tRNA-cmnm(5)s(2)U34. This Maricaulis maris (strain MCS10) (Caulobacter maris) protein is tRNA modification GTPase MnmE.